The sequence spans 448 residues: Putative RNA-ligase (448 aa).

This sequence belongs to the asfivirus M448R family.

It is found in the virion. This chain is Putative RNA-ligase, found in Ornithodoros (relapsing fever ticks).